The sequence spans 1954 residues: Protein GREB1 (1954 aa).

3 disordered regions span residues 48–83 (LSSL…QLPP), 238–342 (LAAF…AKHE), and 1083–1235 (KGPK…GSSS). A compositionally biased stretch (acidic residues) spans 59 to 68 (NEEEEEDGEG). Over residues 292–303 (SSLSALPRPSAL) the composition is skewed to low complexity. 2 stretches are compositionally biased toward basic and acidic residues: residues 1083–1099 (KGPK…KLSS) and 1122–1133 (GPVKRERSHSHD). A compositionally biased stretch (low complexity) spans 1134–1146 (SASSSLSSRASGS). A compositionally biased stretch (polar residues) spans 1187 to 1196 (RVSQGSTVIS). Residues 1224–1235 (SSQLSSSSGSSS) are compositionally biased toward low complexity. The chain crosses the membrane as a helical span at residues 1873 to 1893 (DMVFSGLLLYLCDSFVGASFL).

This sequence belongs to the GREB1 family.

It is found in the membrane. Its function is as follows. May play a role in estrogen-stimulated cell proliferation. The sequence is that of Protein GREB1 (Greb1) from Mus musculus (Mouse).